The following is a 440-amino-acid chain: Trigger factor (440 aa).

In terms of domain architecture, PPIase FKBP-type spans Gly163–Pro248.

Belongs to the FKBP-type PPIase family. Tig subfamily.

The protein localises to the cytoplasm. It carries out the reaction [protein]-peptidylproline (omega=180) = [protein]-peptidylproline (omega=0). In terms of biological role, involved in protein export. Acts as a chaperone by maintaining the newly synthesized protein in an open conformation. Functions as a peptidyl-prolyl cis-trans isomerase. The protein is Trigger factor of Solidesulfovibrio magneticus (strain ATCC 700980 / DSM 13731 / RS-1) (Desulfovibrio magneticus).